A 319-amino-acid chain; its full sequence is Acetyl-coenzyme A carboxylase carboxyl transferase subunit alpha (319 aa).

The region spanning 38–293 is the CoA carboxyltransferase C-terminal domain; that stretch reads HALQDKLRMR…KAVLLNELDA (256 aa).

The protein belongs to the AccA family. In terms of assembly, acetyl-CoA carboxylase is a heterohexamer composed of biotin carboxyl carrier protein (AccB), biotin carboxylase (AccC) and two subunits each of ACCase subunit alpha (AccA) and ACCase subunit beta (AccD).

Its subcellular location is the cytoplasm. The enzyme catalyses N(6)-carboxybiotinyl-L-lysyl-[protein] + acetyl-CoA = N(6)-biotinyl-L-lysyl-[protein] + malonyl-CoA. The protein operates within lipid metabolism; malonyl-CoA biosynthesis; malonyl-CoA from acetyl-CoA: step 1/1. Its function is as follows. Component of the acetyl coenzyme A carboxylase (ACC) complex. First, biotin carboxylase catalyzes the carboxylation of biotin on its carrier protein (BCCP) and then the CO(2) group is transferred by the carboxyltransferase to acetyl-CoA to form malonyl-CoA. This is Acetyl-coenzyme A carboxylase carboxyl transferase subunit alpha from Stenotrophomonas maltophilia (strain K279a).